Consider the following 305-residue polypeptide: Glycine--tRNA ligase alpha subunit (305 aa).

Belongs to the class-II aminoacyl-tRNA synthetase family. As to quaternary structure, tetramer of two alpha and two beta subunits.

It is found in the cytoplasm. The catalysed reaction is tRNA(Gly) + glycine + ATP = glycyl-tRNA(Gly) + AMP + diphosphate. The polypeptide is Glycine--tRNA ligase alpha subunit (Vibrio parahaemolyticus serotype O3:K6 (strain RIMD 2210633)).